A 354-amino-acid chain; its full sequence is Peptide-N(4)-(N-acetyl-beta-D-glucosaminyl)asparagine amidase F (354 aa).

The first 40 residues, 1–40 (MRKLLIFSISAYLMAGIVSCKGVDSATPVTEDRLALNAVN), serve as a signal peptide directing secretion. An intrachain disulfide couples C91 to C96. Catalysis depends on residues D100, E158, and E246. Intrachain disulfides connect C244-C248 and C271-C292.

In terms of assembly, monomer.

The catalysed reaction is Hydrolysis of an N(4)-(acetyl-beta-D-glucosaminyl)asparagine residue in which the glucosamine residue may be further glycosylated, to yield a (substituted) N-acetyl-beta-D-glucosaminylamine and a peptide containing an aspartate residue.. Its function is as follows. Cleaves an entire glycan from a glycoprotein. Requires that the glycosylated asparagine moiety (reaction 1) be substituted on its amino (R1) and carboxyl (R2) terminus with a polypeptide chain. This Elizabethkingia miricola (Chryseobacterium miricola) protein is Peptide-N(4)-(N-acetyl-beta-D-glucosaminyl)asparagine amidase F (ngl).